Here is a 402-residue protein sequence, read N- to C-terminus: Type II NADH:quinone oxidoreductase (402 aa).

FAD-binding positions include 12 to 16, 39 to 40, and valine 83; these read GAGYA and NK. The active site involves glutamate 172. FAD-binding positions include aspartate 302, 319-320, and lysine 379; that span reads AQ.

This sequence belongs to the NADH dehydrogenase family. It depends on FAD as a cofactor.

It is found in the cell membrane. It carries out the reaction a quinone + NADH + H(+) = a quinol + NAD(+). Alternative, nonproton pumping NADH:quinone oxidoreductase that delivers electrons to the respiratory chain by oxidation of NADH and reduction of quinones, and contributes to the regeneration of NAD(+). In Staphylococcus epidermidis (strain ATCC 12228 / FDA PCI 1200), this protein is Type II NADH:quinone oxidoreductase.